A 43-amino-acid polypeptide reads, in one-letter code: Large ribosomal subunit protein uL5 (43 aa).

Belongs to the universal ribosomal protein uL5 family. In terms of assembly, part of the 50S ribosomal subunit; part of the 5S rRNA/L5/L18/L25 subcomplex. Contacts the 5S rRNA and the P site tRNA. Forms a bridge to the 30S subunit in the 70S ribosome.

This is one of the proteins that bind and probably mediate the attachment of the 5S RNA into the large ribosomal subunit, where it forms part of the central protuberance. In the 70S ribosome it contacts protein S13 of the 30S subunit (bridge B1b), connecting the 2 subunits; this bridge is implicated in subunit movement. Contacts the P site tRNA; the 5S rRNA and some of its associated proteins might help stabilize positioning of ribosome-bound tRNAs. The protein is Large ribosomal subunit protein uL5 (rplE) of Serratia marcescens.